Consider the following 809-residue polypeptide: Cell division control protein 48 homolog A (809 aa).

S2 bears the N-acetylserine mark. Position 41 is a phosphoserine (S41). Residues G210, 248–256, and H387 contribute to the ADP site; that span reads GPPGSGKTL. 521-529 is a binding site for ATP; sequence GPPGCGKTL. Positions 782–809 are disordered; the sequence is AGSGATTGVADPFATSAAAAGDDDDLYN. The segment covering 791–801 has biased composition (low complexity); it reads ADPFATSAAAA.

Belongs to the AAA ATPase family. In terms of assembly, homohexamer. Interacts with SERK1, GRF6, KAPP and SYP31, but not with KNOLLE. Component of the SERK1 signaling complex, composed of KAPP, CDC48A, GRF6 or GRF7, SERK1, SERK2, SERK3/BAK1 and BRI1. Interacts with PUX1, PUX2, PUX3, PUX4, PUX5, PUX7 and PUX11 via its N-terminus. Post-translationally, phosphorylated on at least one threonine residue and on Ser-41 by SERK1.

The protein localises to the nucleus. It is found in the cytoplasm. The protein resides in the cytoskeleton. It localises to the phragmoplast. Its subcellular location is the cell membrane. Functionally, probably functions in cell division and growth processes. Interacts with certain SNAREs as part of specialized membrane fusion events where vesicles from the same organelle fuse (homotypic fusion). This is Cell division control protein 48 homolog A (CDC48A) from Arabidopsis thaliana (Mouse-ear cress).